Reading from the N-terminus, the 714-residue chain is A-kinase anchor protein 5 (714 aa).

Disordered regions lie at residues 1 to 146 and 243 to 333; these read METS…GYVR and VLEN…VGHT. Positions 1–164 are essential to the intracellular anchoring function; that stretch reads METSVSEIQI…EIKAQIQPDE (164 aa). Residues S4 and S22 each carry the phosphoserine modification. A compositionally biased stretch (basic and acidic residues) spans 10 to 32; sequence IETKDEKRPEAASPQKERQERKT. C36 carries the S-palmitoyl cysteine lipid modification. Over residues 37–50 the composition is skewed to basic residues; it reads FKRRKKVNKKKAKA. Basic and acidic residues-rich tracts occupy residues 54–63 and 88–100; these read TAEETEKHAP and KPSE…KPSE. The AKAP CaM-binding signature appears at 74 to 94; it reads AGAWASIKRLVTHRKPSESAE. Residue C123 is the site of S-palmitoyl cysteine attachment. Polar residues predominate over residues 243–268; it reads VLENSAADSPQPVTSTAPLSPATTHQ. The span at 285 to 301 shows a compositional bias: basic and acidic residues; sequence GKDDGRRKTAAEEKKSG. The 1; approximate repeat unit spans residues 305–312; it reads LGQAEEAS. Residues 305 to 597 form a 28 X 8 AA repeats of V-G-Q-A-E-E-A-T region; the sequence is LGQAEEASSV…PIVGQAEETV (293 aa). Residues 310 to 323 show a composition bias toward polar residues; the sequence is EASSVSQADKSVLS. A 2; approximate repeat occupies 322-329; sequence LSQAEEAT. Residues 330 to 337 form a 3; approximate repeat; the sequence is VGHTEEAT. A 4; approximate repeat occupies 350 to 357; sequence LSQAEEAT. One copy of the 5; approximate repeat lies at 358–365; the sequence is VAQAKETV. Residues 366–373 form a 6; approximate repeat; the sequence is LSQAEEVK. Residues 398–405 form a 7; approximate repeat; sequence VSQAEEAI. An 8; approximate repeat occupies 414–421; sequence MGQAEEAT. 5 consecutive repeat copies span residues 430–437, 438–445, 446–453, 454–461, and 462–469. The stretch at 470–477 is one 14; approximate repeat; sequence VGQAGEAT. The 15; approximate repeat unit spans residues 486–493; that stretch reads VGQAEEAI. A run of 4 repeats spans residues 494–501, 502–509, 510–517, and 518–525. Residues 526-533 form a 20; approximate repeat; sequence VDQAEEAT. Repeat unit 21 spans residues 534-541; that stretch reads VGQAEEAT. The 22; approximate repeat unit spans residues 542-549; the sequence is VGQAGEAA. The stretch at 550-557 is one 23; approximate repeat; sequence VGQAEEAI. The 24; approximate repeat unit spans residues 558 to 565; sequence VAQAEEAT. Copy 25 of the repeat occupies 566–573; sequence VGQAGEAT. The stretch at 574-581 is one 26; approximate repeat; the sequence is VGQAEKAT. Residues 582–589 form a 27; approximate repeat; sequence VGQAEEPI. Residues 590–597 form a 28; approximate repeat; it reads VGQAEETV. The segment at 675–696 is RII-beta subunit binding domain; that stretch reads YETLLIETASSLVKNAIELSVE. The segment at 697–714 is tethers NFATC2 to CRAC channels; sequence QLVNEMVSEDNQINTLFQ.

Binding protein for dimer of the RII-beta regulatory subunit of cAMP-dependent protein kinase (PKA) and also for the protein kinase C (PKC) and the phosphatase calcineurin (PP2B). Each enzyme is inhibited when bound to the anchoring protein. Also binds the beta2-adrenergic receptor. Part of a complex containing AKAP5, ADCY5, ADCY6 and PDE4C. Interacts with ADCY8, and enhances its phosphorylation at lipid rafts. Interacts with ORAI1 (isoform alpha) (via N-terminus) upon store depletion and in response to LTC4. Does not interact with ORAI2 and ORAI3 paralogs. Interacts (via leucine zipper domain) with NFATC2/NFAT1. Interacts with calmodulin; the interaction is calcium-independent. Interacts with KCNQ2; the interaction may help KCNQ2 channel complex to retain calcium-bound calmodulin. Interacts with KCNK2; the channel is recruited to postsynaptic microdomains by AKAP5 where it can integrate neurotransmitter receptor signals. Part of a complex composed of AKAP5 and ADRB2. Palmitoylated. Palmitoylation at Cys-36 and Cys-123 plays a key role in the targeting of AKAP5 to lipid rafts. Palmitoylation by ZDHHC2 is required for AKAP5 function in LTP-stimulated recycling endosome exocytosis.

Its subcellular location is the postsynaptic recycling endosome membrane. It is found in the cell projection. The protein resides in the dendrite. It localises to the postsynaptic cell membrane. Functionally, multivalent scaffold protein that anchors the cAMP-dependent protein kinase/PKA to cytoskeletal and/or organelle-associated proteins, targeting the signal carried by cAMP to specific intracellular effectors. Association with the beta2-adrenergic receptor (beta2-AR) not only regulates beta2-AR signaling pathway, but also the activation by PKA by switching off the beta2-AR signaling cascade. Plays a role in long term synaptic potentiation by regulating protein trafficking from the dendritic recycling endosomes to the plasma membrane and controlling both structural and functional plasticity at excitatory synapses. In hippocampal pyramidal neurons, recruits KCNK2/TREK-1 channel at postsynaptic dense bodies microdomains and converts it to a leak channel no longer sensitive to stimulation by arachidonic acid, acidic pH or mechanical stress, nor inhibited by Gq-coupled receptors but still under the negative control of Gs-coupled receptors. Associates with ORAI1 pore-forming subunit of CRAC channels in Ca(2+) signaling microdomains where it recruits NFATC2/NFAT1 and couples store-operated Ca(2+) influx to calmodulin and calcineurin signaling and activation of NFAT-dependent transcriptional responses. The polypeptide is A-kinase anchor protein 5 (Akap5) (Rattus norvegicus (Rat)).